The chain runs to 227 residues: Ribose-5-phosphate isomerase A (227 aa).

Residues 30-33, 86-89, and 99-104 each bind substrate; these read TGST, DGAD, and KGMGGA. E108 functions as the Proton acceptor in the catalytic mechanism. A substrate-binding site is contributed by K126.

This sequence belongs to the ribose 5-phosphate isomerase family. In terms of assembly, homodimer.

It catalyses the reaction aldehydo-D-ribose 5-phosphate = D-ribulose 5-phosphate. The protein operates within carbohydrate degradation; pentose phosphate pathway; D-ribose 5-phosphate from D-ribulose 5-phosphate (non-oxidative stage): step 1/1. Involved in the first step of the non-oxidative branch of the pentose phosphate pathway. It catalyzes the reversible conversion of ribose-5-phosphate to ribulose 5-phosphate. Can also act on D-ribose-5-diphosphate and D-ribose-5-triphosphate as substrate. The polypeptide is Ribose-5-phosphate isomerase A (Thermus thermophilus (strain ATCC BAA-163 / DSM 7039 / HB27)).